A 664-amino-acid chain; its full sequence is Gametogenetin-binding protein 2 (664 aa).

Disordered regions lie at residues 375 to 425 and 447 to 476; these read QEKK…NTSE and KKGL…QEGS. Residues 376 to 388 show a composition bias toward basic residues; sequence EKKRQKKNRRKNK. Over residues 452–475 the composition is skewed to polar residues; sequence PHSNVSDCGYSSSLEGSEPGSQEG.

Its subcellular location is the cytoplasm. Functionally, may be involved in spermatogenesis. The sequence is that of Gametogenetin-binding protein 2 (ggnbp2) from Xenopus laevis (African clawed frog).